Here is a 275-residue protein sequence, read N- to C-terminus: Large ribosomal subunit protein uL2 (275 aa).

A disordered region spans residues 214-275 (RWRGNRPTVR…NKFILSHRNK (62 aa)). Residues 255–275 (KGKKTRSNKRTNKFILSHRNK) are compositionally biased toward basic residues.

Belongs to the universal ribosomal protein uL2 family. As to quaternary structure, part of the 50S ribosomal subunit. Forms a bridge to the 30S subunit in the 70S ribosome.

In terms of biological role, one of the primary rRNA binding proteins. Required for association of the 30S and 50S subunits to form the 70S ribosome, for tRNA binding and peptide bond formation. It has been suggested to have peptidyltransferase activity; this is somewhat controversial. Makes several contacts with the 16S rRNA in the 70S ribosome. The protein is Large ribosomal subunit protein uL2 of Blochmanniella pennsylvanica (strain BPEN).